A 139-amino-acid chain; its full sequence is Small ribosomal subunit protein uS12 (139 aa).

2 disordered regions span residues 1–22 (MPTINQLVRKGRKSHKGKSKSP) and 37–57 (KTPSPQKRGVATRVGTMTPKK). Basic residues predominate over residues 9–19 (RKGRKSHKGKS). Position 102 is a 3-methylthioaspartic acid (aspartate 102).

Belongs to the universal ribosomal protein uS12 family. As to quaternary structure, part of the 30S ribosomal subunit. Contacts proteins S8 and S17. May interact with IF1 in the 30S initiation complex.

In terms of biological role, with S4 and S5 plays an important role in translational accuracy. Its function is as follows. Interacts with and stabilizes bases of the 16S rRNA that are involved in tRNA selection in the A site and with the mRNA backbone. Located at the interface of the 30S and 50S subunits, it traverses the body of the 30S subunit contacting proteins on the other side and probably holding the rRNA structure together. The combined cluster of proteins S8, S12 and S17 appears to hold together the shoulder and platform of the 30S subunit. In Limosilactobacillus reuteri (strain DSM 20016) (Lactobacillus reuteri), this protein is Small ribosomal subunit protein uS12.